The following is a 402-amino-acid chain: 2-pyrone synthase (402 aa).

Acetoacetyl-CoA-binding residues include Lys60, Arg63, Cys169, Leu272, Arg274, Gly310, Arg312, and Ala313. Residue Cys169 is part of the active site.

This sequence belongs to the thiolase-like superfamily. Chalcone/stilbene synthases family. In terms of tissue distribution, expressed in both vegetative and reproductive organs. The expression is strong in the leaf, scape (the inflorescence stem) and corolla (both in the ligule and the unpigmented tube), moderate in the bract and carpel, detectable in the root and pappus but not detectable in the stamen.

The catalysed reaction is 2 malonyl-CoA + acetyl-CoA + 2 H(+) = triacetate lactone + 2 CO2 + 3 CoA. Functionally, polyketide synthase, which uses acetyl-CoA and two condensation reactions with malonyl-CoA to form triacetic acid lactone (also called methylpyrone), a precursor of phytoalexin. May participate in insect and pathogen resistance. The protein is 2-pyrone synthase of Gerbera hybrida (Daisy).